The chain runs to 557 residues: Dihydroxy-acid dehydratase (557 aa).

Mg(2+) is bound at residue Asp78. Cys119 is a binding site for [2Fe-2S] cluster. Residues Asp120 and Lys121 each coordinate Mg(2+). An N6-carboxylysine modification is found at Lys121. Position 191 (Cys191) interacts with [2Fe-2S] cluster. Residue Glu442 coordinates Mg(2+). The active-site Proton acceptor is Ser468.

Belongs to the IlvD/Edd family. In terms of assembly, homodimer. [2Fe-2S] cluster is required as a cofactor. Requires Mg(2+) as cofactor.

The enzyme catalyses (2R)-2,3-dihydroxy-3-methylbutanoate = 3-methyl-2-oxobutanoate + H2O. It carries out the reaction (2R,3R)-2,3-dihydroxy-3-methylpentanoate = (S)-3-methyl-2-oxopentanoate + H2O. Its pathway is amino-acid biosynthesis; L-isoleucine biosynthesis; L-isoleucine from 2-oxobutanoate: step 3/4. It functions in the pathway amino-acid biosynthesis; L-valine biosynthesis; L-valine from pyruvate: step 3/4. Its function is as follows. Functions in the biosynthesis of branched-chain amino acids. Catalyzes the dehydration of (2R,3R)-2,3-dihydroxy-3-methylpentanoate (2,3-dihydroxy-3-methylvalerate) into 2-oxo-3-methylpentanoate (2-oxo-3-methylvalerate) and of (2R)-2,3-dihydroxy-3-methylbutanoate (2,3-dihydroxyisovalerate) into 2-oxo-3-methylbutanoate (2-oxoisovalerate), the penultimate precursor to L-isoleucine and L-valine, respectively. The polypeptide is Dihydroxy-acid dehydratase (Lachnospira eligens (strain ATCC 27750 / DSM 3376 / VPI C15-48 / C15-B4) (Eubacterium eligens)).